We begin with the raw amino-acid sequence, 536 residues long: MSSPNLAHPPTDYTGIVLFPRELSQFFMGDAGETLLINGAPGTGKTLFTIRGLDVLDRDSDVLYVSTRVDQETVHEMYFADHSSLDTTAILDLFQDPFELPLDVDVPFEKLDLDSLLEWIQEINAATTQLTIAFDSWELIYEYLAVRHDDPPDIKTVTNQLAVLAREENIRLMLVTETAAPSSLEYIVDGVVTLQVKEDDRGRTRRDLRLDKLRGVRIGNRLQPFTLADGQFQVITPVELLTIQTGTGNGTWDPLANSKAKFSTGIRDLDRILSGGYNRGSVVHLDLGPDLSRDAWSVLTLPTIRNFLSQEMGVAVVPPREGSPGLLHNDLNTVLSSQVFDTYCHVFETYAGPSDSADRYDQPDSTESFSEMATTTPPDDAPTATHETDGADDGSRSTDGVTGSDQPHPIDEDFESPIEGGQLAYEPYMAYVEQVREESEDPLLHVISMDTAQEAFETRLGDFANYVALHNDLTLLITKQGTELRTRADRVADMHFRLERSGDAIILYGENPLTPLLGIGISQSESIPKITLTEMV.

39 to 46 (GAPGTGKT) is an ATP binding site. A disordered region spans residues 352–413 (GPSDSADRYD…SDQPHPIDED (62 aa)). Positions 363 to 372 (PDSTESFSEM) are enriched in polar residues. A compositionally biased stretch (low complexity) spans 373-385 (ATTTPPDDAPTAT). The segment covering 386–396 (HETDGADDGSR) has biased composition (basic and acidic residues).

Belongs to the gas vesicle GvpD family. As to quaternary structure, interacts with GvpE.

The protein localises to the cytoplasm. In terms of biological role, causes a decrease in the amount of GvpE protein. The 5'-region of its promoter or mRNA has a repressive function on downstream genes. Gas vesicles are hollow, gas filled proteinaceous nanostructures found in several microbial planktonic microorganisms. They allow positioning of halobacteria at the optimal depth for growth in the poorly aerated, shallow brine pools of their habitat. Its function is as follows. Expression of a 9.5 kb p-vac DNA fragment containing 2 divergently transcribed regions (gvpD-gvpE-gvpF-gvpG-gvpH-gvpI-gvpJ-gvpK-gvpL-gvpM and gvpA-gvpC-gvpN-gvpO) allows H.volcanii to produce gas vesicles. A similar region restores gas vesicle production in H.halobium without the p-vac locus, but it still has the c-vac locus. The protein is Protein GvpD1 (gvpD11) of Halobacterium salinarum (strain ATCC 700922 / JCM 11081 / NRC-1) (Halobacterium halobium).